Reading from the N-terminus, the 903-residue chain is MTRSCSAVGCSTRDTVLSRERGLSFHQFPTDTIQRSKWIRAVNRVDPRSKKIWIPGPGAILCSKHFQESDFESYGIRRKLKKGAVPSVSLYKIPQGVHLKGKARQKILKQPLPDNSQEVATEDHNYSLKTPLTIGAEKLAEVQQMLQVSKKRLISVKNYRMIKKRKGLRLIDALVEEKLLSEETECLLRAQFSDFKWELYNWRETDEYSAEMKQFACTLYLCSSKVYDYVRKILKLPHSSILRTWLSKCQPSPGFNSNIFSFLQRRVENGDQLYQYCSLLIKSMPLKQQLQWDPSSHSLQGFMDFGLGKLDADETPLASETVLLMAVGIFGHWRTPLGYFFVNRASGYLQAQLLRLTIGKLSDIGITVLAVTSDATAHSVQMAKALGIHIDGDDMKCTFQHPSSSSQQIAYFFDSCHLLRLIRNAFQNFQSIQFINGIAHWQHLVELVALEEQELSNMERIPSTLANLKNHVLKVNSATQLFSESVASALEYLLSLDLPPFQNCIGTIHFLRLINNLFDIFNSRNCYGKGLKGPLLPETYSKINHVLIEAKTIFVTLSDTSNNQIIKGKQKLGFLGFLLNAESLKWLYQNYVFPKVMPFPYLLTYKFSHDHLELFLKMLRQVLVTSSSPTCMAFQKAYYNLETRYKFQDEVFLSKVSIFDISIARRKDLALWTVQRQYGVSVTKTVFHEEGICQDWSHCSLSEALLDLSDHRRNLICYAGYVANKLSALLTCEDCITALYASDLKASKIGSLLFVKKKNGLHFPSESLCRVINICERVVRTHSRMAIFELVSKQRELYLQQKILCELSGHINLFVDVNKHLFDGEVCAINHFVKLLKDIIICFLNIRAKNVAQNPLKHHSERTDMKTLSRKHWSSVQDYKCSSFANTSSKFRHLLSNDGYPFK.

A THAP-type zinc finger spans residues 1 to 89 (MTRSCSAVGC…LKKGAVPSVS (89 aa)). The HCFC1-binding motif (HBM) motif lies at 123 to 126 (DHNY).

Its function is as follows. Active transposase that specifically recognizes the bipartite 5'-TXXGGGX(A/T)-3' consensus motif and mediates transposition. The protein is DNA transposase THAP9 (THAP9) of Homo sapiens (Human).